A 289-amino-acid polypeptide reads, in one-letter code: Glycine--tRNA ligase alpha subunit (289 aa).

It belongs to the class-II aminoacyl-tRNA synthetase family. In terms of assembly, tetramer of two alpha and two beta subunits.

The protein resides in the cytoplasm. It carries out the reaction tRNA(Gly) + glycine + ATP = glycyl-tRNA(Gly) + AMP + diphosphate. The protein is Glycine--tRNA ligase alpha subunit (glyQ) of Rickettsia prowazekii (strain Madrid E).